Reading from the N-terminus, the 124-residue chain is uncharacterized protein (124 aa).

Positions 1–18 (MHIIKTLISVGVAFSLSA) are cleaved as a signal peptide. A lipid anchor (N-palmitoyl cysteine) is attached at Cys-19. Cys-19 carries the S-diacylglycerol cysteine lipid modification.

The protein localises to the cell membrane. This is an uncharacterized protein from Pasteurella multocida (strain Pm70).